The chain runs to 154 residues: Dau c 1 isoallergen Dau c 1.0301 (154 aa).

It belongs to the BetVI family. As to expression, expressed in roots.

This chain is Dau c 1 isoallergen Dau c 1.0301, found in Daucus carota (Wild carrot).